The sequence spans 441 residues: Protein FAM83A (441 aa).

Disordered regions lie at residues 81–108 (SNDN…MNSD) and 312–368 (GMSI…SPLQ). Residues 314–327 (SIMSDSNPESINTT) show a composition bias toward polar residues. Over residues 328–354 (SEPFSSISTASISNDSQRPKSPVSTTP) the composition is skewed to low complexity.

Belongs to the FAM83 family.

Its subcellular location is the cytoplasm. May function in the epidermal growth factor receptor/EGFR signaling pathway. In Xenopus tropicalis (Western clawed frog), this protein is Protein FAM83A.